The chain runs to 427 residues: Cryptic catabolic NAD-specific glutamate dehydrogenase GudB (427 aa).

Lys80 and Lys107 together coordinate substrate. Lys119 (proton donor) is an active-site residue. Thr203 and Asn234 together coordinate NAD(+). Substrate is bound at residue Ser361.

The protein belongs to the Glu/Leu/Phe/Val dehydrogenases family. Homohexamer.

It carries out the reaction L-glutamate + NAD(+) + H2O = 2-oxoglutarate + NH4(+) + NADH + H(+). In terms of biological role, gudB seems to be intrinsically inactive, however spontaneous mutations removing a 9-bp direct repeat within the wild-type gudB sequence activated the GudB protein and allowed more-efficient utilization of amino acids of the glutamate family (called gutB1). This 3 amino acid insertion presumably causes severe destabilization of the fold of the protein, leading to an inactive enzyme that is very quickly degraded. The cryptic GudB serves as a buffer that may compensate for mutations in the rocG gene and that can also be decryptified for the utilization of glutamate as a single carbon source in the absence of arginine. It is unable to synthesize glutamate. The chain is Cryptic catabolic NAD-specific glutamate dehydrogenase GudB from Bacillus subtilis (strain 168).